Here is a 1452-residue protein sequence, read N- to C-terminus: MEQGMDYWLGQIQQKDVGKRLQVGPDLMEYLSDRQKSIDLEQDQTVLDRMVDGLATSWVNSSNYKVALLGMDILSALVTRLQDRFRSQIGTVLPSLMDRLGDAKDSVREQDQNLLIKIMEQASNPQYVWERMFSGFKHKNFRTREGVCLCLIATLNVYGAHSLTLSKIVPHICNLLGDPNSQVRDAAINCLVEIYRHVGERVRADLSKKGLPQSRLNVIFTKFDEVQKSGTMILSSADKNFDDEDSVDGNRPSSASSSASSKAPQAARRGVSLGTARRPGTSSAAPKPGGTAKEGAGGVDEEDFIRGFEDVPTVQIYSSRDLEESLNKIREILSDDKHDWEQRISALKKIRSLLLAGAAEYDTFFPQLRLLDGAFKLSAKDLRSQVVREACITLGHLSSVLGNKFDHGAEAIMPTVFNLVPNSAKIMATSGVVAIRLIIRQTHVPRLIPIITSNCTSKSVAVRRRCYEFLDLLLQEWQTHSLERHVSVLAETIKKGIHDADSEARIVARKCYWGFHSHFSKEAEQLFHTLESSYQKALQSHLKNSDSIVSLPQSDRSSSSSQESLNRPLSAKRSPTGSTVSRASTATSKSTPGSLQRSRSDIDVNAATCAKSKATSGASAAPFSSVAALPPGSYASLGRIRTRRQSSGSTTSTASTPADTRGRSRAKVVSQSQPGSRSSSPGKLLGSGYGGIASGPQRVPQMPSSEKRSKIPRSQGCSRETSPSRIGLDRFGISQPGRIPSAMRVLSSSTDLEAAVADALKKPVRRRYEPYGMYSDDDANSDASSACSERSYSSKNGGIPHYLRQTEDVAEVLNHCASSNWSERKEGLIGLQNLLKSQRTLSRVELKRLCEIFTRMFADPHSKRVFSMFLETLVDFVIIHKDDLQDWLFILLTQLLKKMGADLLGSVQAKVQKALDVTRDSFPFDQQFNILMRFIVDQTQTPNLKVKVAILKYIESLARQMDPTDFVNSSETRLAVSRIITWTTEPKSSDVRKAAQVVLISLFELNTPEFTMLLGALPKTFQDGATKLLHNHLKNSSNSSMGSPSNTIGRTPSRHSSSRASPLTSPTNCSHGGLSPSMLDYDTENLNSDEIYSSLRGVTEAIEKFSFRSQVDLNEPVRREGKKESELGSCDVGIASPASDLRGGTDMVEGGRMALDNKTSLLNTQPPRAFTGPRGREYNPYAYSDSINSYDKTALKEAVFDDDMDQLRDVPIDHSDLVADLLKELSNHNERVEERKGALCELLKITREDSLAVWEEHFKTILLLLLETLGDKDHAIRALALRVLREILRNQPARFKNYAELTIMKTLEAHKDSHKEVVRAAEEAASTLAGSIHPEQCIKVLCPIIQTADYPINLAAIKMQTKVIERISKESLHQILPDIIPGLLQGYDNTESSVRKASVFCLVAIYSVIGEELKPYLAQLTGGKMKLLNLYIKRAQTTNSNSSSSSDVSTHS.

3 HEAT repeats span residues L68–S87, Q88–N124, and L163–E200. The interval K239 to V299 is disordered. Positions S253–A267 are enriched in low complexity. 2 HEAT repeats span residues H407–T442 and H443–T479. Disordered stretches follow at residues S545 to Q735 and Y771 to Y792. The span at S550 to L569 shows a compositional bias: low complexity. Over residues R573–R597 the composition is skewed to polar residues. Composition is skewed to low complexity over residues A606–A621, Q645–D659, and V668–G682. A compositionally biased stretch (polar residues) spans Q715–S724. Over residues S781–Y792 the composition is skewed to low complexity. An HEAT 6 repeat occupies Q926–P963. The segment at L1033–P1076 is disordered. The span at K1034–N1046 shows a compositional bias: low complexity. Polar residues predominate over residues S1058 to S1070. HEAT repeat units lie at residues E1256–A1293 and Q1374–E1411.

Belongs to the CLASP family. Interacts (via C-terminus) with clip1/clip-170, and cenpe.

It is found in the cytoplasm. Its subcellular location is the cytoskeleton. It localises to the microtubule organizing center. The protein localises to the centrosome. The protein resides in the chromosome. It is found in the centromere. Its subcellular location is the kinetochore. It localises to the spindle. The protein localises to the golgi apparatus. The protein resides in the trans-Golgi network. Its function is as follows. Microtubule plus-end tracking protein that promotes the stabilization of dynamic microtubules during anaphase. Plays a crucial role in chromatin-induced microtubule formation. May also act at microtubule minus ends. May be involved in the nucleation of noncentrosomal microtubules originating from the trans-Golgi network (TGN). This Xenopus tropicalis (Western clawed frog) protein is CLIP-associating protein 1.